Reading from the N-terminus, the 267-residue chain is Translation initiation factor 2 subunit alpha (267 aa).

The S1 motif domain maps to 12–83; sequence GEIVMATVER…KRKYANLSLR (72 aa).

Belongs to the eIF-2-alpha family. In terms of assembly, heterotrimer composed of an alpha, a beta and a gamma chain.

In terms of biological role, eIF-2 functions in the early steps of protein synthesis by forming a ternary complex with GTP and initiator tRNA. The chain is Translation initiation factor 2 subunit alpha from Methanopyrus kandleri (strain AV19 / DSM 6324 / JCM 9639 / NBRC 100938).